The chain runs to 1066 residues: Exportin-T (1066 aa).

It belongs to the exportin family.

It localises to the nucleus. Its subcellular location is the cytoplasm. Its function is as follows. tRNA nucleus export receptor which facilitates tRNA translocation across the nuclear pore complex. Involved in pre-tRNA splicing, probably by affecting the interaction of pre-tRNA with splicing endonuclease. The protein is Exportin-T (LOS1) of Laccaria bicolor (strain S238N-H82 / ATCC MYA-4686) (Bicoloured deceiver).